The primary structure comprises 435 residues: MNEVPEPSPELLQRAGAVRRAAVDLGMADDGQRMQALQAMADALAERSDALVAANREDLDRSASEGLAPALLARLKLDAAKLEGAIDGVRKVASLKDPLGRRDLHRELDQGLTLERVTVPLGVLGVIFEARPDAVIQIASLAIRSGNGALLKGGSEARCTNEAVMEALKAGLASSAVSPDALALLTTRQESLALLKLDGLVDLIIPRGSNELVRFIQDNTRIPVLGHADGICHLYVDAAADLDKAVRVALDSKTQYPAACNAIETLLVHRSVAASFLSAAIPAFRDAGVVLRGDAASVALGVPESATEADWRTEYLDLTLAVKVVDDLAAAADHIRRFGSRHTECIVTEDAAAADRFLSSIDSAGVYHNCSTRFADGFRYGFGAEVGISTQTLPPRGPVGLEGLVTYRYRLRGDGHVAADYASGASRFTHNDLSL.

Belongs to the gamma-glutamyl phosphate reductase family.

Its subcellular location is the cytoplasm. It carries out the reaction L-glutamate 5-semialdehyde + phosphate + NADP(+) = L-glutamyl 5-phosphate + NADPH + H(+). It functions in the pathway amino-acid biosynthesis; L-proline biosynthesis; L-glutamate 5-semialdehyde from L-glutamate: step 2/2. Its function is as follows. Catalyzes the NADPH-dependent reduction of L-glutamate 5-phosphate into L-glutamate 5-semialdehyde and phosphate. The product spontaneously undergoes cyclization to form 1-pyrroline-5-carboxylate. The protein is Gamma-glutamyl phosphate reductase of Synechococcus sp. (strain WH7803).